The following is a 306-amino-acid chain: Serrate RNA effector molecule homolog (306 aa).

The interval 1–28 (HKEEELLGSSGGPPPEEPPKEGNPAEIN) is disordered. Thr101 is subject to Phosphothreonine. The residue at position 109 (Ser109) is a Phosphoserine. The disordered stretch occupies residues 251-284 (GPPYPHGPYGAGRGNYDAFRGQGGYPGKPRNRMV). Omega-N-methylarginine occurs at positions 263, 270, and 280.

This sequence belongs to the ARS2 family. Interacts with CASP8AP2, ERBB4, NCBP1/CBP80 and DROSHA. Interacts with LUZP4. Interacts with NCBP2/CBP20 and NCBP3.

It is found in the nucleus. The protein resides in the nucleoplasm. Its subcellular location is the cytoplasm. In terms of biological role, acts as a mediator between the cap-binding complex (CBC) and the primary microRNAs (miRNAs) processing machinery during cell proliferation. Contributes to the stability and delivery of capped primary miRNA transcripts to the primary miRNA processing complex containing DGCR8 and DROSHA, thereby playing a role in RNA-mediated gene silencing (RNAi) by miRNAs. Binds capped RNAs (m7GpppG-capped RNA); however interaction is probably mediated via its interaction with NCBP1/CBP80 component of the CBC complex. Involved in cell cycle progression at S phase. Does not directly confer arsenite resistance but rather modulates arsenic sensitivity. Independently of its activity on miRNAs, necessary and sufficient to promote neural stem cell self-renewal. Does so by directly binding SOX2 promoter and positively regulating its transcription. This chain is Serrate RNA effector molecule homolog (SRRT), found in Cricetulus griseus (Chinese hamster).